The chain runs to 280 residues: BURP domain protein USPL1 (280 aa).

The signal sequence occupies residues 1–24; it reads MASTFRLSISFLTLILFSLWVVEA. Residues 58-280 enclose the BURP domain; sequence YFTLNDLKLG…PLDNIVWVTK (223 aa).

In terms of tissue distribution, expressed in cotyledons, radicle, floral buds, open flowers, roots and developing seeds, but not in leaves. Highly expressed in the root tips. Detected in young leaves, hypocotyls, stems and mature seed funiculum.

It localises to the protein storage vacuole. The protein localises to the golgi apparatus. The protein resides in the golgi stack. Its subcellular location is the trans-Golgi network. It is found in the prevacuolar compartment. In terms of biological role, associated with the protein storage vacuole formation. The protein is BURP domain protein USPL1 of Arabidopsis thaliana (Mouse-ear cress).